Here is a 230-residue protein sequence, read N- to C-terminus: 2-C-methyl-D-erythritol 4-phosphate cytidylyltransferase (230 aa).

Belongs to the IspD/TarI cytidylyltransferase family. IspD subfamily.

The catalysed reaction is 2-C-methyl-D-erythritol 4-phosphate + CTP + H(+) = 4-CDP-2-C-methyl-D-erythritol + diphosphate. Its pathway is isoprenoid biosynthesis; isopentenyl diphosphate biosynthesis via DXP pathway; isopentenyl diphosphate from 1-deoxy-D-xylulose 5-phosphate: step 2/6. Catalyzes the formation of 4-diphosphocytidyl-2-C-methyl-D-erythritol from CTP and 2-C-methyl-D-erythritol 4-phosphate (MEP). The protein is 2-C-methyl-D-erythritol 4-phosphate cytidylyltransferase of Shewanella halifaxensis (strain HAW-EB4).